A 244-amino-acid chain; its full sequence is tRNA pseudouridine synthase A (244 aa).

Catalysis depends on Asp-52, which acts as the Nucleophile. Tyr-110 provides a ligand contact to substrate.

It belongs to the tRNA pseudouridine synthase TruA family. Homodimer.

The enzyme catalyses uridine(38/39/40) in tRNA = pseudouridine(38/39/40) in tRNA. Functionally, formation of pseudouridine at positions 38, 39 and 40 in the anticodon stem and loop of transfer RNAs. This is tRNA pseudouridine synthase A from Clostridium botulinum (strain Eklund 17B / Type B).